The primary structure comprises 377 residues: MAEDKHNKNPLKMLESLGKELISGLLDDFVEKNVLKLEEEEKKKIYDAKLQDKARVLVDSIRQKNQEAGQVFVQTFLNIDKNSTSIKAPEETVAGPDESVGSAATLKLCPHEEFLKLCKERAGEIYPIKERKDRTRLALIICNTEFDHMPPRNGAALDILGMKQLLEGLGYTVEVEEKLTARDMESVLWKFAAREEHKSSDSTFLVFMSHGILDGICGTMHSEEEPDVLPYDTIFRTFNNRNCLSLKDKPKVIIVQACRGANRGELWVSDSPPALADSFSQSSENLEEDAVYKTHVEKDFIAFCSSTPHNVSWRDIKKGSLFITRLITCFQKYAWCCHLEEVFRKVQQSFEKPNVKAQMPTVERLSMTRYFYLFPGN.

Positions methionine 1–aspartate 59 are required for LPS-binding. A propeptide spanning residues methionine 1–aspartate 80 is cleaved from the precursor. A CARD domain is found at methionine 1–glutamate 91. Serine 83 carries the phosphoserine modification. Active-site residues include histidine 210 and cysteine 258. A propeptide spanning residues serine 271–aspartate 289 is cleaved from the precursor.

Belongs to the peptidase C14A family. Heterotetramer that consists of two anti-parallel arranged heterodimers, each one formed by a 20 kDa (Caspase-4 subunit p20) and a 10 kDa (Caspase-4 subunit p10) subunit. Upon direct LPS-binding, forms large homooligomers, resulting in its activation. These oligomers are often referred to as 'non-canonical inflammasomes'. In its precursor form, interacts with TMEM214; this interaction is required for association with the endoplasmic reticulum membrane. Interacts with CASP1. Interacts with NOD2. Interacts with Serpinb1a, Serpinb1b and Serpinb1c; these interactions regulate CASP4 activity. As to quaternary structure, heterotetramer that consists of two anti-parallel arranged heterodimers, each one formed by a 20 kDa (Caspase-4 subunit p20) and a 10 kDa (Caspase-4 subunit p10) subunit. Post-translationally, in response to activation signals, undergoes autoproteolytic cleavage and activation.

The protein resides in the cytoplasm. It localises to the cytosol. Its subcellular location is the endoplasmic reticulum membrane. It is found in the mitochondrion. The protein localises to the inflammasome. The protein resides in the secreted. The catalysed reaction is Strict requirement for Asp at the P1 position. It has a preferred cleavage sequence of Tyr-Val-Ala-Asp-|- but also cleaves at Asp-Glu-Val-Asp-|-.. Its activity is regulated as follows. Activated by homooligomerization induced by direct binding to cytosolic LPS, in a TLR4-independent manner. In addition to LPS, CASP4/CASP11 may also be activated by oxidized phospholipid 1-palmitoyl-2-arachidonoyl- sn-glycero-3-phosphorylcholine, an oxidized phospholipid (oxPAPC), in dendritic cells, promoting adaptive immunity. The role of oxPAPC is however unclear and another report suggests that oxPAPC competes with LPS-binding and inhibits the non-canonical inflammasome in macrophages. Functionally, inflammatory caspase that acts as the effector of the non-canonical inflammasome by mediating lipopolysaccharide (LPS)-induced pyroptosis. Also indirectly activates the NLRP3 and NLRP6 inflammasomes. Acts as a thiol protease that cleaves a tetrapeptide after an Asp residue at position P1: catalyzes cleavage of CGAS, GSDMD and IL18. Effector of the non-canonical inflammasome independently of NLRP3 inflammasome and CASP1: the non-canonical inflammasome promotes pyroptosis through GSDMD cleavage without involving secretion of cytokine IL1B. In the non-canonical inflammasome, CASP4 is activated by direct binding to the lipid A moiety of LPS without the need of an upstream sensor. LPS-binding promotes CASP4 activation and CASP4-mediated cleavage of GSDMD and IL18, followed by IL18 secretion through the GSDMD pore, pyroptosis of infected cells and their extrusion into the gut lumen. Also indirectly promotes secretion of mature cytokines (IL1A and HMGB1) downstream of GSDMD-mediated pyroptosis via activation of the NLRP3 and NLRP6 inflammasomes. Involved in NLRP3-dependent CASP1 activation and IL1B secretion in response to non-canonical activators, such as UVB radiation or cholera enterotoxin. Involved in NLRP6 inflammasome-dependent activation in response to lipoteichoic acid (LTA), a cell-wall component of Gram-positive bacteria, which leads to CASP1 activation and IL1B secretion. Involved in LPS-induced IL6 secretion; this activity may not require caspase enzymatic activity. The non-canonical inflammasome is required for innate immunity to cytosolic, but not vacuolar, bacteria. Plays a crucial role in the restriction of S.typhimurium replication in colonic epithelial cells during infection. Pyroptosis limits bacterial replication, while cytokine secretion promotes the recruitment and activation of immune cells and triggers mucosal inflammation. May also act as an activator of adaptive immunity in dendritic cells, following activation by oxidized phospholipid 1-palmitoyl-2-arachidonoyl- sn-glycero-3-phosphorylcholine, an oxidized phospholipid (oxPAPC). Cleavage of GSDMD is not strictly dependent on the consensus cleavage site but depends on an exosite interface on CASP4 that recognizes and binds the Gasdermin-D, C-terminal (GSDMD-CT) part. Catalyzes cleavage and maturation of IL18; IL18 processing also depends of the exosite interface on CASP4. In contrast, it does not directly process IL1B. During non-canonical inflammasome activation, cuts CGAS and may play a role in the regulation of antiviral innate immune activation. This is Caspase-4 (CASP4) from Bos taurus (Bovine).